The primary structure comprises 172 residues: Translation initiation factor IF-3 (172 aa).

Belongs to the IF-3 family. In terms of assembly, monomer.

The protein resides in the cytoplasm. IF-3 binds to the 30S ribosomal subunit and shifts the equilibrium between 70S ribosomes and their 50S and 30S subunits in favor of the free subunits, thus enhancing the availability of 30S subunits on which protein synthesis initiation begins. This chain is Translation initiation factor IF-3, found in Oceanobacillus iheyensis (strain DSM 14371 / CIP 107618 / JCM 11309 / KCTC 3954 / HTE831).